A 629-amino-acid chain; its full sequence is Iron multicopper oxidase fer1 (629 aa).

The signal sequence occupies residues 1 to 29 (MVAPQRRTVMPALGLLASSLCSLLLTANA). 2 Plastocyanin-like domains span residues 44-164 (VNPD…IHPD) and 175-338 (DDYT…TISY). N-linked (GlcNAc...) asparagine glycosylation is found at asparagine 58 and asparagine 69. Cu cation-binding residues include histidine 91 and histidine 93. N-linked (GlcNAc...) asparagine glycosylation occurs at asparagine 98. 2 residues coordinate Cu cation: histidine 144 and histidine 146. N-linked (GlcNAc...) asparagine glycans are attached at residues asparagine 188, asparagine 222, asparagine 236, asparagine 253, asparagine 303, asparagine 331, and asparagine 398. The 137-residue stretch at 401 to 537 (YVAPQVPALF…LASIFIEAPD (137 aa)) folds into the Plastocyanin-like 3 domain. Cu cation-binding residues include histidine 452, histidine 455, and histidine 457. Residue asparagine 482 is glycosylated (N-linked (GlcNAc...) asparagine). Positions 517, 518, 519, and 523 each coordinate Cu cation. A glycan (N-linked (GlcNAc...) asparagine) is linked at asparagine 569. A helical transmembrane segment spans residues 592 to 612 (AIAAFTGCIITGLLGLATVVV).

It belongs to the multicopper oxidase family. It depends on Cu cation as a cofactor.

The protein localises to the cell membrane. Functionally, iron transport multicopper oxidase, which is required for Fe(2+) high affinity uptake. May be required to oxidize Fe(2+) and release it from the transporter. Essential component of copper-dependent iron transport. This is Iron multicopper oxidase fer1 from Mycosarcoma maydis (Corn smut fungus).